We begin with the raw amino-acid sequence, 342 residues long: MVLLAIETSCDETAAAVVRDGRLVLSSVVSSQVAVHAEYGGVVPEIASRKHLEMITPVVRQALDEAGVSLAEIEGIAVTRGPGLLGALLVGVSMAKSLALACKIPLVGVHHIEGHLLAGFLEQPVAFPFLALVVSGGHTHLYRVDGIGRYRILGRTIDDAVGEAYDKTATLLGLGYPGGALIDRLAQQGSPTAVKFPRPLLHDKSLNFSFSGLKTAVLTHLKKQPHVPEGAELHDLCASFQAAVCEVLVKKTEAALKQEGLQRLVVGGGVACNSGLRHAMQQLATRLKIELQIPPPVLCGDNAAMLAVAGDAYLSAGCQDDLAMDATATWPLDQVARWEQLP.

Fe cation contacts are provided by His-111 and His-115. Residues 133-137 (VVSGG), Asp-166, Gly-179, Asp-183, and Asn-273 contribute to the substrate site. Asp-301 contributes to the Fe cation binding site.

The protein belongs to the KAE1 / TsaD family. Fe(2+) serves as cofactor.

Its subcellular location is the cytoplasm. The enzyme catalyses L-threonylcarbamoyladenylate + adenosine(37) in tRNA = N(6)-L-threonylcarbamoyladenosine(37) in tRNA + AMP + H(+). Required for the formation of a threonylcarbamoyl group on adenosine at position 37 (t(6)A37) in tRNAs that read codons beginning with adenine. Is involved in the transfer of the threonylcarbamoyl moiety of threonylcarbamoyl-AMP (TC-AMP) to the N6 group of A37, together with TsaE and TsaB. TsaD likely plays a direct catalytic role in this reaction. This Trichlorobacter lovleyi (strain ATCC BAA-1151 / DSM 17278 / SZ) (Geobacter lovleyi) protein is tRNA N6-adenosine threonylcarbamoyltransferase.